Here is a 545-residue protein sequence, read N- to C-terminus: T-complex protein 1 subunit gamma (545 aa).

Met-1 bears the N-acetylmethionine mark. Residues 1–24 are disordered; the sequence is MMGHRPVLVLSQNTKRESGRKVQS. At Ser-11 the chain carries Phosphoserine. Lys-15 participates in a covalent cross-link: Glycyl lysine isopeptide (Lys-Gly) (interchain with G-Cter in SUMO2). Gly-42 is a binding site for ADP. An ATP-binding site is contributed by Gly-42. Residue Asp-93 coordinates Mg(2+). Positions 94, 95, 96, 97, 162, and 163 each coordinate ADP. ATP contacts are provided by Gly-94, Thr-95, and Thr-96. Residue Ser-170 is modified to Phosphoserine. N6-acetyllysine is present on Lys-222. Residues Ser-243 and Ser-244 each carry the phosphoserine modification. Phosphotyrosine is present on Tyr-247. Glycyl lysine isopeptide (Lys-Gly) (interchain with G-Cter in SUMO2) cross-links involve residues Lys-248 and Lys-249. Position 252 is a phosphoserine (Ser-252). A disulfide bridge links Cys-366 with Cys-372. Lys-381 is covalently cross-linked (Glycyl lysine isopeptide (Lys-Gly) (interchain with G-Cter in SUMO2)). Residue Gly-411 coordinates ADP. Residue Gly-411 coordinates ATP. Thr-430 and Thr-459 each carry phosphothreonine. ADP is bound by residues Gly-482, Glu-483, Glu-497, and Lys-502. Gly-482 contacts ATP. Glu-497 contacts ATP. The segment at 526–545 is disordered; that stretch reads HKKKGDDQSRQGGAPDAGQE.

The protein belongs to the TCP-1 chaperonin family. As to quaternary structure, component of the chaperonin-containing T-complex (TRiC), a hexadecamer composed of two identical back-to-back stacked rings enclosing a protein folding chamber. Each ring is made up of eight different subunits: TCP1/CCT1, CCT2, CCT3, CCT4, CCT5, CCT6A/CCT6, CCT7, CCT8. Interacts with PACRG. Interacts with DNAAF4. Interacts with DLEC1.

Its subcellular location is the cytoplasm. The enzyme catalyses ATP + H2O = ADP + phosphate + H(+). In terms of biological role, component of the chaperonin-containing T-complex (TRiC), a molecular chaperone complex that assists the folding of actin, tubulin and other proteins upon ATP hydrolysis. The TRiC complex mediates the folding of WRAP53/TCAB1, thereby regulating telomere maintenance. As part of the TRiC complex may play a role in the assembly of BBSome, a complex involved in ciliogenesis regulating transports vesicles to the cilia. The protein is T-complex protein 1 subunit gamma (CCT3) of Bos taurus (Bovine).